The primary structure comprises 122 residues: MARIAGVNIPTAKRVPIALTYITGIGNTSAKAICEAVGIDATRRVNELSDAEILAIREHIDANYSVEGDLRREVQMNIKRLMDLGCYRGLRHRRNLPVRGQRTHTNARTRKGPAKAIAGKKK.

Residues 98–122 form a disordered region; sequence VRGQRTHTNARTRKGPAKAIAGKKK.

It belongs to the universal ribosomal protein uS13 family. In terms of assembly, part of the 30S ribosomal subunit. Forms a loose heterodimer with protein S19. Forms two bridges to the 50S subunit in the 70S ribosome.

In terms of biological role, located at the top of the head of the 30S subunit, it contacts several helices of the 16S rRNA. In the 70S ribosome it contacts the 23S rRNA (bridge B1a) and protein L5 of the 50S subunit (bridge B1b), connecting the 2 subunits; these bridges are implicated in subunit movement. Contacts the tRNAs in the A and P-sites. In Ruegeria pomeroyi (strain ATCC 700808 / DSM 15171 / DSS-3) (Silicibacter pomeroyi), this protein is Small ribosomal subunit protein uS13.